The following is a 343-amino-acid chain: Cell cycle control protein 50C (343 aa).

Residues 1–34 (MKRKCQDYESRLPDNTAVKQQQLPAFRLQLTASE) are Cytoplasmic-facing. The helical transmembrane segment at 35–55 (ILSGFFAIGLFCLGMGIILLL) threads the bilayer. Residues 56–306 (SAKSIKEVEI…STLTWSGGSS (251 aa)) are Extracellular-facing. N-linked (GlcNAc...) asparagine glycosylation is found at Asn-66, Asn-164, Asn-205, and Asn-265. The chain crosses the membrane as a helical span at residues 307 to 327 (LFLALAYLVTGAVTLLASFSM). Residues 328–343 (MALHLKLKERKTFFLQ) lie on the Cytoplasmic side of the membrane.

The protein belongs to the CDC50/LEM3 family.

Its subcellular location is the membrane. In Bos taurus (Bovine), this protein is Cell cycle control protein 50C (TMEM30C).